The sequence spans 455 residues: Phosphoglucosamine mutase (455 aa).

The active-site Phosphoserine intermediate is the S106. Positions 106, 245, 247, and 249 each coordinate Mg(2+). Phosphoserine is present on S106.

It belongs to the phosphohexose mutase family. It depends on Mg(2+) as a cofactor. In terms of processing, activated by phosphorylation.

It catalyses the reaction alpha-D-glucosamine 1-phosphate = D-glucosamine 6-phosphate. Catalyzes the conversion of glucosamine-6-phosphate to glucosamine-1-phosphate. This Acaryochloris marina (strain MBIC 11017) protein is Phosphoglucosamine mutase.